Here is a 262-residue protein sequence, read N- to C-terminus: GTP cyclohydrolase 1 type 2 homolog (262 aa).

A divalent metal cation is bound by residues H64, H65, D103, H224, and E228.

The protein belongs to the GTP cyclohydrolase I type 2/NIF3 family. In terms of assembly, homohexamer.

This is GTP cyclohydrolase 1 type 2 homolog from Clostridium perfringens (strain 13 / Type A).